The sequence spans 316 residues: Mitochondrial distribution and morphology protein 12 (316 aa).

Positions 1-312 (MSIDLEWNGL…FPNFHTLVLG (312 aa)) constitute an SMP-LTD domain.

Belongs to the MDM12 family. As to quaternary structure, component of the ER-mitochondria encounter structure (ERMES) or MDM complex, composed of MMM1, MDM10, MDM12 and MDM34. An MMM1 homodimer associates with one molecule of MDM12 on each side in a pairwise head-to-tail manner, and the SMP-LTD domains of MMM1 and MDM12 generate a continuous hydrophobic tunnel for phospholipid trafficking.

Its subcellular location is the mitochondrion outer membrane. It is found in the endoplasmic reticulum membrane. Its function is as follows. Component of the ERMES/MDM complex, which serves as a molecular tether to connect the endoplasmic reticulum (ER) and mitochondria. Components of this complex are involved in the control of mitochondrial shape and protein biogenesis, and function in nonvesicular lipid trafficking between the ER and mitochondria. MDM12 is required for the interaction of the ER-resident membrane protein MMM1 and the outer mitochondrial membrane-resident beta-barrel protein MDM10. The MDM12-MMM1 subcomplex functions in the major beta-barrel assembly pathway that is responsible for biogenesis of all mitochondrial outer membrane beta-barrel proteins, and acts in a late step after the SAM complex. The MDM10-MDM12-MMM1 subcomplex further acts in the TOM40-specific pathway after the action of the MDM12-MMM1 complex. Essential for establishing and maintaining the structure of mitochondria and maintenance of mtDNA nucleoids. This is Mitochondrial distribution and morphology protein 12 from Postia placenta (strain ATCC 44394 / Madison 698-R) (Brown rot fungus).